The primary structure comprises 607 residues: Aspartate--tRNA(Asp/Asn) ligase (607 aa).

L-aspartate is bound at residue glutamate 173. Residues 197 to 200 (QLFK) are aspartate. Arginine 219 serves as a coordination point for L-aspartate. ATP-binding positions include 219-221 (RDE) and glutamine 228. Histidine 456 provides a ligand contact to L-aspartate. Glutamate 498 is a binding site for ATP. Arginine 505 is an L-aspartate binding site. 550–553 (GLDR) serves as a coordination point for ATP.

The protein belongs to the class-II aminoacyl-tRNA synthetase family. Type 1 subfamily. In terms of assembly, homodimer.

It is found in the cytoplasm. It catalyses the reaction tRNA(Asx) + L-aspartate + ATP = L-aspartyl-tRNA(Asx) + AMP + diphosphate. Aspartyl-tRNA synthetase with relaxed tRNA specificity since it is able to aspartylate not only its cognate tRNA(Asp) but also tRNA(Asn). Reaction proceeds in two steps: L-aspartate is first activated by ATP to form Asp-AMP and then transferred to the acceptor end of tRNA(Asp/Asn). The chain is Aspartate--tRNA(Asp/Asn) ligase from Magnetococcus marinus (strain ATCC BAA-1437 / JCM 17883 / MC-1).